Here is a 428-residue protein sequence, read N- to C-terminus: Tubby-like F-box protein 5 (428 aa).

The interval 17 to 65 (IGSMSRRAADGRAGGGRGGSRHSWPVLWSEQQQPPQQQQLQRQEHQQQQ) is disordered. Over residues 47–65 (QQQPPQQQQLQRQEHQQQQ) the composition is skewed to low complexity. Residues 65-117 (QGRWANLPPELLLDVIQRVEASEATWPARRQVVACAAVCRSWREVTKEVVKTL) form the F-box domain.

It belongs to the TUB family. Ubiquitous.

The chain is Tubby-like F-box protein 5 (TULP5) from Oryza sativa subsp. japonica (Rice).